A 432-amino-acid polypeptide reads, in one-letter code: Adenylosuccinate synthetase (432 aa).

Residues 13–19 (GDEGKGK) and 41–43 (GHT) each bind GTP. The Proton acceptor role is filled by D14. Residues D14 and G41 each coordinate Mg(2+). IMP-binding positions include 14–17 (DEGK), 39–42 (NAGH), T130, R144, Q225, T240, and R304. Residue H42 is the Proton donor of the active site. 300–306 (AVTGRPR) contributes to the substrate binding site. Residues R306, 332-334 (KLD), and 415-417 (STG) each bind GTP.

It belongs to the adenylosuccinate synthetase family. Homodimer. It depends on Mg(2+) as a cofactor.

Its subcellular location is the cytoplasm. The catalysed reaction is IMP + L-aspartate + GTP = N(6)-(1,2-dicarboxyethyl)-AMP + GDP + phosphate + 2 H(+). Its pathway is purine metabolism; AMP biosynthesis via de novo pathway; AMP from IMP: step 1/2. Its function is as follows. Plays an important role in the de novo pathway of purine nucleotide biosynthesis. Catalyzes the first committed step in the biosynthesis of AMP from IMP. This Pasteurella multocida (strain Pm70) protein is Adenylosuccinate synthetase.